The following is a 304-amino-acid chain: Methionyl-tRNA formyltransferase (304 aa).

106–109 (SLLP) serves as a coordination point for (6S)-5,6,7,8-tetrahydrofolate.

The protein belongs to the Fmt family.

The catalysed reaction is L-methionyl-tRNA(fMet) + (6R)-10-formyltetrahydrofolate = N-formyl-L-methionyl-tRNA(fMet) + (6S)-5,6,7,8-tetrahydrofolate + H(+). In terms of biological role, attaches a formyl group to the free amino group of methionyl-tRNA(fMet). The formyl group appears to play a dual role in the initiator identity of N-formylmethionyl-tRNA by promoting its recognition by IF2 and preventing the misappropriation of this tRNA by the elongation apparatus. The polypeptide is Methionyl-tRNA formyltransferase (Thermosipho africanus (strain TCF52B)).